The primary structure comprises 357 residues: DNA replication and repair protein RecF (357 aa).

30–37 (GANGSGKT) serves as a coordination point for ATP.

The protein belongs to the RecF family.

Its subcellular location is the cytoplasm. Functionally, the RecF protein is involved in DNA metabolism; it is required for DNA replication and normal SOS inducibility. RecF binds preferentially to single-stranded, linear DNA. It also seems to bind ATP. The polypeptide is DNA replication and repair protein RecF (Citrobacter koseri (strain ATCC BAA-895 / CDC 4225-83 / SGSC4696)).